The following is a 394-amino-acid chain: Fatty acid resistance protein FarA (394 aa).

The interval 1-23 (MKSGNSEPNLMETHTDETKLQNT) is disordered. Residues 33 to 53 (ALTLLFALSAAAAGSAFFLWW) form a helical membrane-spanning segment. Residues 356-376 (SAAGAPVSKTPGAALPEMEST) are disordered.

Belongs to the membrane fusion protein (MFP) (TC 8.A.1) family. As to quaternary structure, probably part of a tripartite efflux system FarAB-MtrE, which is composed of an inner membrane transporter, FarB, a periplasmic membrane fusion protein, FarA, and an outer membrane component, MtrE.

It is found in the cell inner membrane. Mediates resistance to long-chained antibacterial fatty acids (FAs). Function is dependent on the MtrE outer membrane protein. The polypeptide is Fatty acid resistance protein FarA (Neisseria gonorrhoeae).